The following is a 262-amino-acid chain: tRNA (guanine-N(7)-)-methyltransferase (262 aa).

Positions 1–58 are disordered; sequence MLPQDTNTDPLPGDDAESASGKSADASQGTPNPGDEVAHPRRIRSFVRRAGRTSTGQQ. Basic residues predominate over residues 40 to 51; sequence PRRIRSFVRRAG. Residues E92, E117, D144, and D167 each coordinate S-adenosyl-L-methionine. Residue D167 is part of the active site. Substrate is bound at residue K171. An interaction with RNA region spans residues 173–178; that stretch reads RHNKRR. Residues D203 and 241–244 contribute to the substrate site; that span reads TKFE.

The protein belongs to the class I-like SAM-binding methyltransferase superfamily. TrmB family.

The enzyme catalyses guanosine(46) in tRNA + S-adenosyl-L-methionine = N(7)-methylguanosine(46) in tRNA + S-adenosyl-L-homocysteine. Its pathway is tRNA modification; N(7)-methylguanine-tRNA biosynthesis. Its function is as follows. Catalyzes the formation of N(7)-methylguanine at position 46 (m7G46) in tRNA. The sequence is that of tRNA (guanine-N(7)-)-methyltransferase from Cupriavidus metallidurans (strain ATCC 43123 / DSM 2839 / NBRC 102507 / CH34) (Ralstonia metallidurans).